A 744-amino-acid chain; its full sequence is Polyadenylate-binding protein, cytoplasmic and nuclear (744 aa).

Residues 1–11 (MSEVANSTSPV) show a composition bias toward polar residues. Positions 1–42 (MSEVANSTSPVQDGADANGAQINTNVPAASGDAPTPTTAAQQ) are disordered. Residues 33 to 42 (APTPTTAAQQ) show a composition bias toward low complexity. RRM domains follow at residues 48–126 (ASLY…WSQR), 136–213 (GNVF…HHIP), 229–306 (TNIY…RAQK), and 332–462 (VNLY…LAQR). 4 disordered regions span residues 368–411 (EEKK…AGDK), 527–550 (GRGAGFPGGMPGQQGGRGGPNAQQ), 607–651 (IAGG…PGVD), and 723–744 (VKNKEGDGEKEAPKEESKEEKA). Basic and acidic residues predominate over residues 376–397 (KEVKEEKKEDEKKEDEEAKEGS). Composition is skewed to gly residues over residues 527-545 (GRGAGFPGGMPGQQGGRGG), 609-632 (GGPGIRGGQGGFPQGGRGAPGGRG), and 640-649 (PQGGRPGGPG). Residues 647-724 (GPGVDMSVLS…AMSVYDEYVK (78 aa)) enclose the PABC domain.

This sequence belongs to the polyadenylate-binding protein type-1 family.

It localises to the cytoplasm. The protein localises to the nucleus. Binds the poly(A) tail of mRNA. Appears to be an important mediator of the multiple roles of the poly(A) tail in mRNA biogenesis, stability and translation. In the nucleus, involved in both mRNA cleavage and polyadenylation. Is also required for efficient mRNA export to the cytoplasm. Acts in concert with a poly(A)-specific nuclease (PAN) to affect poly(A) tail shortening, which may occur concomitantly with either nucleocytoplasmic mRNA transport or translational initiation. In the cytoplasm, stimulates translation initiation and regulates mRNA decay through translation termination-coupled poly(A) shortening, probably mediated by PAN. This chain is Polyadenylate-binding protein, cytoplasmic and nuclear (PAB1), found in Phaeosphaeria nodorum (strain SN15 / ATCC MYA-4574 / FGSC 10173) (Glume blotch fungus).